The following is a 235-amino-acid chain: Ribonuclease PH (235 aa).

Residues Arg86 and 124-126 (GTR) contribute to the phosphate site.

Belongs to the RNase PH family. In terms of assembly, homohexameric ring arranged as a trimer of dimers.

It carries out the reaction tRNA(n+1) + phosphate = tRNA(n) + a ribonucleoside 5'-diphosphate. Functionally, phosphorolytic 3'-5' exoribonuclease that plays an important role in tRNA 3'-end maturation. Removes nucleotide residues following the 3'-CCA terminus of tRNAs; can also add nucleotides to the ends of RNA molecules by using nucleoside diphosphates as substrates, but this may not be physiologically important. Probably plays a role in initiation of 16S rRNA degradation (leading to ribosome degradation) during starvation. The sequence is that of Ribonuclease PH from Francisella tularensis subsp. mediasiatica (strain FSC147).